Consider the following 103-residue polypeptide: Small ribosomal subunit protein uS10 (103 aa).

Belongs to the universal ribosomal protein uS10 family. Part of the 30S ribosomal subunit.

Functionally, involved in the binding of tRNA to the ribosomes. The protein is Small ribosomal subunit protein uS10 of Acinetobacter baylyi (strain ATCC 33305 / BD413 / ADP1).